Consider the following 287-residue polypeptide: 4-hydroxybenzoate octaprenyltransferase (287 aa).

Transmembrane regions (helical) follow at residues 20–40, 43–63, 94–114, 115–135, 137–157, 159–179, 210–230, 235–255, and 266–286; these read IGSLLLLWPTLWALFLAADGL, MHVLVVFVLGVVFMRAAGCVI, LGLFGLLVLVSFVLVLTMNTL, TIMLSVVGLVLAAAYPFMKRY, HLPQLVLGMAFGWSIPMAYAA, AGELPVVAWLLFTANILWTIA, IIIGVLQLSTLVTMILIGHSL, IYYWFLLMASGLFVYQQRLIG, and FLNNNYVGMLIFLGIAISVMM.

Belongs to the UbiA prenyltransferase family. It depends on Mg(2+) as a cofactor.

The protein resides in the cell inner membrane. It catalyses the reaction all-trans-octaprenyl diphosphate + 4-hydroxybenzoate = 4-hydroxy-3-(all-trans-octaprenyl)benzoate + diphosphate. Its pathway is cofactor biosynthesis; ubiquinone biosynthesis. In terms of biological role, catalyzes the prenylation of para-hydroxybenzoate (PHB) with an all-trans polyprenyl group. Mediates the second step in the final reaction sequence of ubiquinone-8 (UQ-8) biosynthesis, which is the condensation of the polyisoprenoid side chain with PHB, generating the first membrane-bound Q intermediate 3-octaprenyl-4-hydroxybenzoate. The sequence is that of 4-hydroxybenzoate octaprenyltransferase from Photobacterium profundum (strain SS9).